Here is a 380-residue protein sequence, read N- to C-terminus: Erythronate-4-phosphate dehydrogenase (380 aa).

Residues Ser45 and Thr66 each contribute to the substrate site. NAD(+) is bound by residues Asp146, Thr174, 205-207 (ASR), and Asp231. Arg207 is a catalytic residue. Glu236 is an active-site residue. Residue His253 is the Proton donor of the active site. Gly256 contributes to the NAD(+) binding site. Tyr257 contacts substrate.

The protein belongs to the D-isomer specific 2-hydroxyacid dehydrogenase family. PdxB subfamily. In terms of assembly, homodimer.

It is found in the cytoplasm. The enzyme catalyses 4-phospho-D-erythronate + NAD(+) = (R)-3-hydroxy-2-oxo-4-phosphooxybutanoate + NADH + H(+). It participates in cofactor biosynthesis; pyridoxine 5'-phosphate biosynthesis; pyridoxine 5'-phosphate from D-erythrose 4-phosphate: step 2/5. Its function is as follows. Catalyzes the oxidation of erythronate-4-phosphate to 3-hydroxy-2-oxo-4-phosphonooxybutanoate. This chain is Erythronate-4-phosphate dehydrogenase, found in Pseudomonas putida (strain W619).